The chain runs to 152 residues: MGLSTLEQKLTAMISAPVEALGFELVGLEFIRARVSTLRIYIDSENGITVDDCADVSHQVSAVLDVEDPISVLYNLEISSPGLERPLFTTEHYQRFIGEEVSLVLRIAMQNRRKWLGIIKTVDGEMITVTVDGKDEVFALSNIQKANLVPHF.

Belongs to the RimP family.

The protein resides in the cytoplasm. Its function is as follows. Required for maturation of 30S ribosomal subunits. This Photorhabdus laumondii subsp. laumondii (strain DSM 15139 / CIP 105565 / TT01) (Photorhabdus luminescens subsp. laumondii) protein is Ribosome maturation factor RimP.